The sequence spans 174 residues: Large ribosomal subunit protein uL10 (174 aa).

This sequence belongs to the universal ribosomal protein uL10 family. Part of the ribosomal stalk of the 50S ribosomal subunit. The N-terminus interacts with L11 and the large rRNA to form the base of the stalk. The C-terminus forms an elongated spine to which L12 dimers bind in a sequential fashion forming a multimeric L10(L12)X complex.

Functionally, forms part of the ribosomal stalk, playing a central role in the interaction of the ribosome with GTP-bound translation factors. This is Large ribosomal subunit protein uL10 from Anaeromyxobacter sp. (strain K).